The primary structure comprises 217 residues: 3-demethoxyubiquinol 3-hydroxylase (217 aa).

Fe cation is bound by residues E66, E96, H99, E148, E180, and H183.

Belongs to the COQ7 family. The cofactor is Fe cation.

Its subcellular location is the cell membrane. The catalysed reaction is a 5-methoxy-2-methyl-3-(all-trans-polyprenyl)benzene-1,4-diol + AH2 + O2 = a 3-demethylubiquinol + A + H2O. It participates in cofactor biosynthesis; ubiquinone biosynthesis. In terms of biological role, catalyzes the hydroxylation of 2-nonaprenyl-3-methyl-6-methoxy-1,4-benzoquinol during ubiquinone biosynthesis. In Xanthomonas axonopodis pv. citri (strain 306), this protein is 3-demethoxyubiquinol 3-hydroxylase.